The primary structure comprises 171 residues: MDLKKYIRDIENFPKTGIMFKDISPLLANGKALNYTITEMAKLAQDVDVIVGPDARGFLFGTPTAAFLKKPFIMVRKPGKLPGDVISKSYDLEYGNNVLQIQKGFIKKGQTVAIIDDVLATGGTTKAIIKLLEEQGAIVKKVILLLELVDLNGRQLITKDNDIEIVSLVKF.

Belongs to the purine/pyrimidine phosphoribosyltransferase family. As to quaternary structure, homodimer.

The protein localises to the cytoplasm. The enzyme catalyses AMP + diphosphate = 5-phospho-alpha-D-ribose 1-diphosphate + adenine. It participates in purine metabolism; AMP biosynthesis via salvage pathway; AMP from adenine: step 1/1. Its function is as follows. Catalyzes a salvage reaction resulting in the formation of AMP, that is energically less costly than de novo synthesis. This is Adenine phosphoribosyltransferase from Mycoplasmopsis fermentans (strain ATCC 19989 / NBRC 14854 / NCTC 10117 / PG18) (Mycoplasma fermentans).